The chain runs to 959 residues: Mitogen-activated protein kinase kinase kinase 13 (959 aa).

The interval 1-47 is disordered; the sequence is MANPQEHLSCSSLPHLPLTENKTSGGRNELAAMGNHPSPKLPEDPQE. Positions 7-18 are enriched in low complexity; sequence HLSCSSLPHLPL. The Protein kinase domain maps to 167-408; sequence ISELQWLGSG…FRQTLMHLDI (242 aa). Residues 173 to 181 and Lys194 contribute to the ATP site; that span reads LGSGAQGAV. Asp278 acts as the Proton acceptor in catalysis. 2 leucine-zipper regions span residues 432–453 and 485–506; these read VKKHFEKIKSEGTCIHRLDEEL and LSAIMLQLEMREKELLKREQAV. Disordered regions lie at residues 533–599, 739–828, 842–902, and 927–959; these read KRKG…GSHS, GSLD…RQRP, SSEN…LSDK, and NPVQFGDSDCDSSEGECSDATVRTSKNYSSATW. Positions 566–577 are enriched in polar residues; sequence SPLSGSPKMSTA. Residues 581–593 show a composition bias toward basic residues; it reads SRYRSKPRHRRGN. Composition is skewed to polar residues over residues 754–774 and 780–790; these read DLSSSPAHNPLSGNAQGSERT and SGCQSGISHQF. Residues 808–820 show a composition bias toward acidic residues; the sequence is DSSEEEGEVDSEV. Positions 866-876 are enriched in basic and acidic residues; that stretch reads SANRRQDRLAE. A compositionally biased stretch (acidic residues) spans 934 to 943; it reads SDCDSSEGEC. The segment covering 947-959 has biased composition (polar residues); it reads TVRTSKNYSSATW.

It belongs to the protein kinase superfamily. STE Ser/Thr protein kinase family. MAP kinase kinase kinase subfamily. In terms of assembly, homodimer; forms dimers through the leucine-zipper motif. Interacts with the C-terminus of MAPK8IP1 through the kinase catalytic domain. Binds PRDX3. Associates with the IKK complex through the kinase domain. Requires Mg(2+) as cofactor. Post-translationally, autophosphorylated on serine and threonine residues.

The protein resides in the cytoplasm. It is found in the membrane. The enzyme catalyses L-seryl-[protein] + ATP = O-phospho-L-seryl-[protein] + ADP + H(+). The catalysed reaction is L-threonyl-[protein] + ATP = O-phospho-L-threonyl-[protein] + ADP + H(+). With respect to regulation, activated by autophosphorylation and homodimerization. In terms of biological role, activates the JUN N-terminal pathway through activation of the MAP kinase kinase MAP2K7. Acts synergistically with PRDX3 to regulate the activation of NF-kappa-B in the cytosol. This activation is kinase-dependent and involves activating the IKK complex, the IKBKB-containing complex that phosphorylates inhibitors of NF-kappa-B. This Mus musculus (Mouse) protein is Mitogen-activated protein kinase kinase kinase 13 (Map3k13).